The following is a 142-amino-acid chain: Large ribosomal subunit protein uL11 (142 aa).

This sequence belongs to the universal ribosomal protein uL11 family. In terms of assembly, part of the ribosomal stalk of the 50S ribosomal subunit. Interacts with L10 and the large rRNA to form the base of the stalk. L10 forms an elongated spine to which L12 dimers bind in a sequential fashion forming a multimeric L10(L12)X complex. In terms of processing, one or more lysine residues are methylated.

In terms of biological role, forms part of the ribosomal stalk which helps the ribosome interact with GTP-bound translation factors. The protein is Large ribosomal subunit protein uL11 of Baumannia cicadellinicola subsp. Homalodisca coagulata.